Here is a 334-residue protein sequence, read N- to C-terminus: Fructose-1,6-bisphosphatase class 1 (334 aa).

The Mg(2+) site is built by glutamate 90, aspartate 113, leucine 115, and aspartate 116. Substrate-binding positions include 116-119 (DGSS), asparagine 209, tyrosine 242, and lysine 272. Glutamate 278 serves as a coordination point for Mg(2+).

This sequence belongs to the FBPase class 1 family. Homotetramer. Mg(2+) is required as a cofactor.

Its subcellular location is the cytoplasm. It catalyses the reaction beta-D-fructose 1,6-bisphosphate + H2O = beta-D-fructose 6-phosphate + phosphate. The protein operates within carbohydrate biosynthesis; gluconeogenesis. The sequence is that of Fructose-1,6-bisphosphatase class 1 from Actinobacillus succinogenes (strain ATCC 55618 / DSM 22257 / CCUG 43843 / 130Z).